Reading from the N-terminus, the 79-residue chain is ATP synthase subunit c (79 aa).

2 helical membrane passes run 7-27 (VSGMAALGAGIAALACIGAGI) and 56-76 (IGSAFSEATAIYGLIIALFLI).

Belongs to the ATPase C chain family. In terms of assembly, F-type ATPases have 2 components, F(1) - the catalytic core - and F(0) - the membrane proton channel. F(1) has five subunits: alpha(3), beta(3), gamma(1), delta(1), epsilon(1). F(0) has three main subunits: a(1), b(2) and c(10-14). The alpha and beta chains form an alternating ring which encloses part of the gamma chain. F(1) is attached to F(0) by a central stalk formed by the gamma and epsilon chains, while a peripheral stalk is formed by the delta and b chains.

The protein localises to the cell membrane. Functionally, f(1)F(0) ATP synthase produces ATP from ADP in the presence of a proton or sodium gradient. F-type ATPases consist of two structural domains, F(1) containing the extramembraneous catalytic core and F(0) containing the membrane proton channel, linked together by a central stalk and a peripheral stalk. During catalysis, ATP synthesis in the catalytic domain of F(1) is coupled via a rotary mechanism of the central stalk subunits to proton translocation. In terms of biological role, key component of the F(0) channel; it plays a direct role in translocation across the membrane. A homomeric c-ring of between 10-14 subunits forms the central stalk rotor element with the F(1) delta and epsilon subunits. This chain is ATP synthase subunit c, found in Clostridium botulinum (strain Hall / ATCC 3502 / NCTC 13319 / Type A).